A 420-amino-acid polypeptide reads, in one-letter code: Zinc finger and BTB domain-containing protein 42 (420 aa).

The 69-residue stretch at 24–92 (CDCTVLVGDA…MYEGRLDLHN (69 aa)) folds into the BTB domain. 2 disordered regions span residues 127–204 (TRTL…HPPC) and 222–247 (VKAE…PPPV). A compositionally biased stretch (low complexity) spans 227 to 241 (DSFSEQDSSSPQSAD). 4 C2H2-type zinc fingers span residues 292-314 (CICP…LSAH), 332-354 (PTCP…ERTH), 360-382 (YTCV…AVVH), and 388-411 (HACR…RKFH).

Belongs to the krueppel C2H2-type zinc-finger protein family. ZBTB18 subfamily. As to expression, highly expressed in skeletal muscle and ovary (at protein level). Low expression in brain, lung, spleen, liver and heart (at protein level). Not detected in kidney and intestines (at protein level). Also observed in testis and, at lower levels, in stomach and nervous system.

The protein localises to the cytoplasm. It localises to the nucleus. It is found in the nucleoplasm. Transcriptional repressor. Specifically binds DNA and probably acts by recruiting chromatin remodeling multiprotein complexes. The polypeptide is Zinc finger and BTB domain-containing protein 42 (Zbtb42) (Mus musculus (Mouse)).